Reading from the N-terminus, the 156-residue chain is Large ribosomal subunit protein uL15 (156 aa).

The disordered stretch occupies residues 29 to 48; sequence CGKGKTSGRGHKGQKARSGV. Over residues 34–43 the composition is skewed to basic residues; it reads TSGRGHKGQK.

This sequence belongs to the universal ribosomal protein uL15 family. In terms of assembly, part of the 50S ribosomal subunit.

Its function is as follows. Binds to the 23S rRNA. This is Large ribosomal subunit protein uL15 from Ehrlichia chaffeensis (strain ATCC CRL-10679 / Arkansas).